A 147-amino-acid polypeptide reads, in one-letter code: Bis(5'-adenosyl)-triphosphatase (147 aa).

The region spanning 2-109 (SFRFGQHLIK…LPRKAGDFHR (108 aa)) is the HIT domain. Substrate contacts are provided by residues His8, Asn27, Gln83, and 89–92 (GQTV). A Histidine triad motif motif is present at residues 94-98 (HVHVH). His96 functions as the Tele-AMP-histidine intermediate in the catalytic mechanism. Substrate is bound at residue His98. Position 114 is a phosphotyrosine; by SRC (Tyr114). Residue Tyr145 is modified to Phosphotyrosine.

As to quaternary structure, homodimer. Interacts with UBE2I. Interacts with MDM2. Interacts with CTNNB1. Identified in a complex with CTNNB1 and LEF1. In terms of processing, phosphorylation at Tyr-114 by SRC is required for induction of apoptosis. Low levels expressed in all tissues tested. Phospho-FHIT observed in liver and kidney, but not in brain and lung. Phospho-FHIT undetected in all tested human tumor cell lines.

It is found in the cytoplasm. It localises to the mitochondrion. Its subcellular location is the nucleus. It carries out the reaction P(1),P(3)-bis(5'-adenosyl) triphosphate + H2O = AMP + ADP + 2 H(+). The enzyme catalyses adenosine 5'-phosphosulfate + H2O = sulfate + AMP + 2 H(+). The catalysed reaction is adenosine 5'-phosphosulfate + NH4(+) = adenosine 5'-phosphoramidate + sulfate + 2 H(+). It catalyses the reaction adenosine 5'-phosphoramidate + H2O = AMP + NH4(+). In terms of biological role, possesses dinucleoside triphosphate hydrolase activity. Cleaves P(1)-P(3)-bis(5'-adenosyl) triphosphate (Ap3A) to yield AMP and ADP. Can also hydrolyze P(1)-P(4)-bis(5'-adenosyl) tetraphosphate (Ap4A), but has extremely low activity with ATP. Exhibits adenylylsulfatase activity, hydrolyzing adenosine 5'-phosphosulfate to yield AMP and sulfate. Exhibits adenosine 5'-monophosphoramidase activity, hydrolyzing purine nucleotide phosphoramidates with a single phosphate group such as adenosine 5'monophosphoramidate (AMP-NH2) to yield AMP and NH2. Exhibits adenylylsulfate-ammonia adenylyltransferase, catalyzing the ammonolysis of adenosine 5'-phosphosulfate resulting in the formation of adenosine 5'-phosphoramidate. Also catalyzes the ammonolysis of adenosine 5-phosphorofluoridate and diadenosine triphosphate. Modulates transcriptional activation by CTNNB1 and thereby contributes to regulate the expression of genes essential for cell proliferation and survival, such as CCND1 and BIRC5. Plays a role in the induction of apoptosis via SRC and AKT1 signaling pathways. Inhibits MDM2-mediated proteasomal degradation of p53/TP53 and thereby plays a role in p53/TP53-mediated apoptosis. Induction of apoptosis depends on the ability of FHIT to bind P(1)-P(3)-bis(5'-adenosyl) triphosphate or related compounds, but does not require its catalytic activity, it may in part come from the mitochondrial form, which sensitizes the low-affinity Ca(2+) transporters, enhancing mitochondrial calcium uptake. Functions as a tumor suppressor. This chain is Bis(5'-adenosyl)-triphosphatase (FHIT), found in Homo sapiens (Human).